Consider the following 258-residue polypeptide: Deoxyribose-phosphate aldolase (258 aa).

The active-site Proton donor/acceptor is the aspartate 102. The active-site Schiff-base intermediate with acetaldehyde is lysine 165. Lysine 199 serves as the catalytic Proton donor/acceptor.

This sequence belongs to the DeoC/FbaB aldolase family. DeoC type 2 subfamily.

Its subcellular location is the cytoplasm. It catalyses the reaction 2-deoxy-D-ribose 5-phosphate = D-glyceraldehyde 3-phosphate + acetaldehyde. Its pathway is carbohydrate degradation; 2-deoxy-D-ribose 1-phosphate degradation; D-glyceraldehyde 3-phosphate and acetaldehyde from 2-deoxy-alpha-D-ribose 1-phosphate: step 2/2. In terms of biological role, catalyzes a reversible aldol reaction between acetaldehyde and D-glyceraldehyde 3-phosphate to generate 2-deoxy-D-ribose 5-phosphate. The protein is Deoxyribose-phosphate aldolase of Vibrio vulnificus (strain CMCP6).